Here is a 311-residue protein sequence, read N- to C-terminus: Aspartate carbamoyltransferase catalytic subunit (311 aa).

Carbamoyl phosphate is bound by residues Arg57 and Thr58. Residue Lys86 participates in L-aspartate binding. Carbamoyl phosphate-binding residues include Arg107, His135, and Gln138. L-aspartate contacts are provided by Arg168 and Arg230. Residues Leu269 and Pro270 each coordinate carbamoyl phosphate.

This sequence belongs to the aspartate/ornithine carbamoyltransferase superfamily. ATCase family. As to quaternary structure, heterooligomer of catalytic and regulatory chains.

The enzyme catalyses carbamoyl phosphate + L-aspartate = N-carbamoyl-L-aspartate + phosphate + H(+). It participates in pyrimidine metabolism; UMP biosynthesis via de novo pathway; (S)-dihydroorotate from bicarbonate: step 2/3. In terms of biological role, catalyzes the condensation of carbamoyl phosphate and aspartate to form carbamoyl aspartate and inorganic phosphate, the committed step in the de novo pyrimidine nucleotide biosynthesis pathway. In Staphylothermus marinus (strain ATCC 43588 / DSM 3639 / JCM 9404 / F1), this protein is Aspartate carbamoyltransferase catalytic subunit.